A 1499-amino-acid polypeptide reads, in one-letter code: ABC multidrug transporter A-2 (1499 aa).

2 disordered regions span residues 1–66 (MAMQ…IDQE) and 80–107 (QISQKSAGPTNTFLDPSSDPELDPNSDK). The segment covering 16 to 30 (ISSSAGQEVASTIRR) has biased composition (polar residues). The span at 31-51 (QFTDADADRIVETPLGEKADS) shows a compositional bias: basic and acidic residues. Residues 80–94 (QISQKSAGPTNTFLD) show a composition bias toward polar residues. Residues 166–415 (LRSILGCRNR…FIDMGFDCPD (250 aa)) enclose the ABC transporter 1 domain. An N-linked (GlcNAc...) asparagine glycan is attached at N339. Transmembrane regions (helical) follow at residues 526 to 546 (MTLATVIGNSIMAFIVSSVFY), 561 to 581 (LLFFAILLNAFASSLEILTLW), 606 to 626 (MIVDLPSKFLVSVVFNLILYF), 635 to 655 (GHFFVFYLFSVTITLTMSNIF), and 669 to 689 (MVPSSIFMMILVIYTGFTIPV). N763 carries N-linked (GlcNAc...) asparagine glycosylation. A helical membrane pass occupies residues 778-798 (GIILGFFFFFLAAYIICSELV). Residues 857-1100 (FHWQDVCYDI…LIKYFENKGS (244 aa)) form the ABC transporter 2 domain. Residue 893 to 900 (GVTGAGKT) coordinates ATP. Helical transmembrane passes span 1193 to 1213 (YIYSKAATSIIPPLFIGFTFW), 1227 to 1247 (FAIFMLLVIFPNLVQQMMPYF), 1268 to 1288 (AFMLASILVELPWNILMAVPA), 1317 to 1337 (LLILIFMMFTSTFSSMIIAGI), and 1353 to 1373 (LCLIFNGVLASPSALPGFWIF). N-linked (GlcNAc...) asparagine glycosylation is present at N1414. A helical transmembrane segment spans residues 1466-1486 (GLLFVYIVFNIFAAIFLYWLI).

The protein belongs to the ABC transporter superfamily. ABCG family. PDR (TC 3.A.1.205) subfamily.

Its subcellular location is the cell membrane. It carries out the reaction itraconazole(in) + ATP + H2O = itraconazole(out) + ADP + phosphate + H(+). The enzyme catalyses voriconazole(in) + ATP + H2O = voriconazole(out) + ADP + phosphate + H(+). With respect to regulation, the efflux inhibitor FK506 impairs the transport activity. Its function is as follows. Pleiotropic ABC efflux transporter that confers resistance to structurally and functionally unrelated compounds including azoles such as itraconazole, posaconazole, and voriconazole. The polypeptide is ABC multidrug transporter A-2 (Aspergillus fumigatus (strain ATCC MYA-4609 / CBS 101355 / FGSC A1100 / Af293) (Neosartorya fumigata)).